The following is a 229-amino-acid chain: Sorting nexin-10A (229 aa).

The PX domain maps to 11 to 128 (FISVWVRDPQ…HLFLQSQLSI (118 aa)). A 1,2-diacyl-sn-glycero-3-phospho-(1D-myo-inositol-3-phosphate) contacts are provided by arginine 54 and arginine 95.

It belongs to the sorting nexin family.

The protein resides in the cytoplasm. The protein localises to the endosome membrane. It localises to the cytoskeleton. It is found in the microtubule organizing center. Its subcellular location is the centrosome. In terms of biological role, probable phosphoinositide-binding protein involved in protein sorting and membrane trafficking in endosomes. May play a role in cilium biogenesis through regulation of the transport and the localization of proteins to the cilium. This chain is Sorting nexin-10A (snx10a), found in Danio rerio (Zebrafish).